The chain runs to 193 residues: Secreted RxLR effector protein 126 (193 aa).

Positions 1 to 20 (MRYLLAVLIAAAFVISSGTS) are cleaved as a signal peptide. The RxLR-dEER signature appears at 50 to 64 (RMLQTKAVNGLEEER).

It belongs to the RxLR effector family.

Its subcellular location is the secreted. It is found in the host membrane. Its function is as follows. Secreted effector that completely suppresses the host cell death induced by cell death-inducing proteins. The sequence is that of Secreted RxLR effector protein 126 from Plasmopara viticola (Downy mildew of grapevine).